The primary structure comprises 93 residues: Integration host factor subunit beta (93 aa).

This sequence belongs to the bacterial histone-like protein family. In terms of assembly, heterodimer of an alpha and a beta chain.

This protein is one of the two subunits of integration host factor, a specific DNA-binding protein that functions in genetic recombination as well as in transcriptional and translational control. The protein is Integration host factor subunit beta of Vibrio parahaemolyticus serotype O3:K6 (strain RIMD 2210633).